A 644-amino-acid chain; its full sequence is MAKIIGIDLGTTNSVVAVMEGGEPKVIPNEEGGRTTPSVVGFTKTGERLVGQVAKRQAITNPENTIFSIKRFMGRRYNEVNEEMKMVPYKVQQAGDHVAVLAQGKEYSPAEISAYILQKLKKAAEDYLGETVTEAVITVPAYFNDAQRQATKDAGKIAGLDVKRIINEPTAAALAYGLDKKKDETIAVYDFGGGTFDISILEVGEGVIEVKSTNGDTHLGGDNIDQRIVEWLIDEFKKKEGLDLRAKGNEMALQRLRDGAERAKIELSTTMETEINLPFITADASGPKHLVERLTRSKLEEMVRDLVDRSIEPCRQALKDAGIDASKIDEVVLVGGQTRMPRIQQVVKEFFGREPHRGVNPDEVVAIGAAIQGGVLKGEVKDLLLLDVTPLTLSIETLGGVATPMIPRNTTIPTKKTETFSTAADNQNSVEIHVLQGERPMAGQNRTLGKFHLTGLPPAPRGVPQIEVTFDIDANGILNVTAKDNATGKDQKITITSSSGLSKEEVERMAKEADAHAAEDKAKKEEIEARNQLDGMVYQIEKMLKENGDKISPSERGDVENALADSKKALETNDAKQMNAARERLTAASHKLAEAMYKQAAPGAGAPGAGPGPEAAGGAQQAQAEPKKDEGVIDAEYVDVDEKK.

Residue threonine 195 is modified to Phosphothreonine; by autocatalysis. Positions 598–644 are disordered; that stretch reads KQAAPGAGAPGAGPGPEAAGGAQQAQAEPKKDEGVIDAEYVDVDEKK. A compositionally biased stretch (low complexity) spans 612 to 624; that stretch reads GPEAAGGAQQAQA. Residues 632-644 show a composition bias toward acidic residues; it reads VIDAEYVDVDEKK.

It belongs to the heat shock protein 70 family.

Its function is as follows. Acts as a chaperone. This Koribacter versatilis (strain Ellin345) protein is Chaperone protein DnaK.